We begin with the raw amino-acid sequence, 430 residues long: Hemagglutinin-esterase (430 aa).

Positions M1–S27 are cleaved as a signal peptide. The segment at L16–V133 is esterase domain first part. At K28–Y404 the chain is on the virion surface side. The Nucleophile role is filled by S49. Residues C53 and C69 are joined by a disulfide bond. N-linked (GlcNAc...) asparagine; by host glycosylation is found at N88, N117, N159, N165, N247, N268, and N289. 3 disulfides stabilise this stretch: C120–C168, C207–C284, and C215–C257. The receptor binding stretch occupies residues G134 to K274. The interval F275 to E390 is esterase domain second part. A disulfide bond links C315 and C320. N324 is a glycosylation site (N-linked (GlcNAc...) asparagine; by host). Residues D336 and H339 each act as charge relay system in the active site. Residue N354 is glycosylated (N-linked (GlcNAc...) asparagine; by host). The cysteines at positions 357 and 382 are disulfide-linked. The helical transmembrane segment at F405 to F425 threads the bilayer. Residues C426–Y430 are Intravirion-facing.

It belongs to the influenza type C/coronaviruses hemagglutinin-esterase family. N-glycosylated.

It is found in the virion membrane. It localises to the host cell membrane. The enzyme catalyses N-acetyl-9-O-acetylneuraminate + H2O = N-acetylneuraminate + acetate + H(+). The catalysed reaction is N-acetyl-4-O-acetylneuraminate + H2O = N-acetylneuraminate + acetate + H(+). Functionally, structural protein that makes short spikes at the surface of the virus. Contains receptor binding and receptor-destroying activities. Mediates de-O-acetylation of N-acetyl-9-O-acetylneuraminic acid, which is probably the receptor determinant recognized by the virus on the surface of erythrocytes and susceptible cells. This receptor-destroying activity is important for virus release as it probably helps preventing self-aggregation and ensures the efficient spread of the progeny virus from cell to cell. May serve as a secondary viral attachment protein for initiating infection, the spike protein being the major one. Seems to be a 'luxury' protein that is not absolutely necessary for virus infection in culture. However, its presence in the virus may alter its pathogenicity. May become a target for both the humoral and the cellular branches of the immune system. The chain is Hemagglutinin-esterase (HE) from Porcine torovirus (strain P10) (PoTV).